A 309-amino-acid polypeptide reads, in one-letter code: MELQFLGTGAGQPAKQRNVSSLVLKLLDEINEVWMFDCGEGTQRQILETSIKPRKIQKIFITHLHGDHIFGLPGFLSSRAFQASEEQTDIEIFGPLGIKSFVQNSLAISGTRLPYKIHFHEFTDKDMGKIMETDKFLVYAEKLAHTIFCMGYRVVQKDLEGTLDAEALKKAGVPFGPLFGKIKNGQDIVLDDGRQILAKDYISEPKKGKVITILGDTRKTPASQRLALNADVLVHESTYGKGDDRIARNHGHSTNMQAAQIAKDANVKRLLLNHVSARFLSRDCRQMEKDAASLFENVKIVKDLEEVTI.

Residues histidine 63, histidine 65, aspartate 67, histidine 68, histidine 145, aspartate 216, and histidine 274 each contribute to the Zn(2+) site. Aspartate 67 functions as the Proton acceptor in the catalytic mechanism.

This sequence belongs to the RNase Z family. Homodimer. Zn(2+) is required as a cofactor.

It carries out the reaction Endonucleolytic cleavage of RNA, removing extra 3' nucleotides from tRNA precursor, generating 3' termini of tRNAs. A 3'-hydroxy group is left at the tRNA terminus and a 5'-phosphoryl group is left at the trailer molecule.. Zinc phosphodiesterase, which displays some tRNA 3'-processing endonuclease activity. Probably involved in tRNA maturation, by removing a 3'-trailer from precursor tRNA. This is Ribonuclease Z from Streptococcus uberis (strain ATCC BAA-854 / 0140J).